The primary structure comprises 396 residues: Proteasome-activating nucleotidase (396 aa).

The stretch at 16–57 (VTYLKRRIRQLELQVRMLEADKERLERELSRLRSEMSRLRQP) forms a coiled coil. ATP contacts are provided by residues 181–186 (GCGKTL) and H320. The tract at residues 394–396 (IYG) is docks into pockets in the proteasome alpha-ring to cause gate opening.

It belongs to the AAA ATPase family. Homohexamer. The hexameric complex has a two-ring architecture resembling a top hat that caps the 20S proteasome core at one or both ends. Upon ATP-binding, the C-terminus of PAN interacts with the alpha-rings of the proteasome core by binding to the intersubunit pockets.

The protein localises to the cytoplasm. ATPase which is responsible for recognizing, binding, unfolding and translocation of substrate proteins into the archaeal 20S proteasome core particle. Is essential for opening the gate of the 20S proteasome via an interaction with its C-terminus, thereby allowing substrate entry and access to the site of proteolysis. Thus, the C-termini of the proteasomal ATPase function like a 'key in a lock' to induce gate opening and therefore regulate proteolysis. Unfolding activity requires energy from ATP hydrolysis, whereas ATP binding alone promotes ATPase-20S proteasome association which triggers gate opening, and supports translocation of unfolded substrates. The polypeptide is Proteasome-activating nucleotidase (Pyrococcus furiosus (strain ATCC 43587 / DSM 3638 / JCM 8422 / Vc1)).